Consider the following 975-residue polypeptide: Lateral signaling target protein 2 homolog (975 aa).

2 disordered regions span residues 299–458 (PLGS…GTDE) and 504–523 (YGTA…PSTS). 4 stretches are compositionally biased toward low complexity: residues 302-352 (SSSI…TTNT), 365-376 (NNHNSNSNSSSN), 383-400 (TLRS…TPTA), and 408-429 (PSHS…PADW). Residues 430 to 458 (SDGDDEDEDDDDIDVDEEDPESSDDGTDE) are compositionally biased toward acidic residues. Residues serine 540 and serine 541 each carry the phosphoserine modification. Disordered regions lie at residues 556–633 (EEHM…SSLS) and 740–891 (DNVF…SPPA). Over residues 564 to 602 (GRHHRHHQSHHHHHHHRHSHQHQHRQPHPHRTTRSGRKR) the composition is skewed to basic residues. Positions 621–633 (LASGDTSAASSLS) are enriched in low complexity. Over residues 751–770 (ATGQRHSAGASMQRNNTIDL) the composition is skewed to polar residues. Serine 796 bears the Phosphoserine mark. Low complexity-rich tracts occupy residues 802 to 860 (AASS…PVSA) and 877 to 890 (PSSA…LSPP). An FYVE-type zinc finger spans residues 895–955 (DGKAPRCMAC…VCRDCYVREV (61 aa)). Residues cysteine 901, cysteine 904, cysteine 917, cysteine 920, cysteine 925, cysteine 928, cysteine 947, and cysteine 950 each contribute to the Zn(2+) site.

The protein belongs to the lst-2 family.

Functionally, negative regulator of epidermal growth factor receptor (EGFR) signaling. This is Lateral signaling target protein 2 homolog from Drosophila sechellia (Fruit fly).